The sequence spans 339 residues: Phosphate acyltransferase (339 aa).

Belongs to the PlsX family. As to quaternary structure, homodimer. Probably interacts with PlsY.

The protein localises to the cytoplasm. The catalysed reaction is a fatty acyl-[ACP] + phosphate = an acyl phosphate + holo-[ACP]. It participates in lipid metabolism; phospholipid metabolism. In terms of biological role, catalyzes the reversible formation of acyl-phosphate (acyl-PO(4)) from acyl-[acyl-carrier-protein] (acyl-ACP). This enzyme utilizes acyl-ACP as fatty acyl donor, but not acyl-CoA. In Aeromonas salmonicida (strain A449), this protein is Phosphate acyltransferase.